Reading from the N-terminus, the 472-residue chain is CAAX prenyl protease 1 homolog (472 aa).

At 1 to 8 (MDVGGALD) the chain is on the lumenal side. The helical transmembrane segment at 9 to 29 (LYGCSVNVYNAILIFIWVLFL) threads the bilayer. Residues 30–75 (WETYINLRQLKVAKRVTESPEEIKCLMNDVDFDKSRRYAIDKMNFD) lie on the Cytoplasmic side of the membrane. The helical transmembrane segment at 76–96 (IVSGFYNILSLSAVLYFQLIA) threads the bilayer. The Lumenal segment spans residues 97–124 (WAWHKSQEHMLFVCSYAPRSFGTTEGSE). A helical transmembrane segment spans residues 125–145 (ILFSLLFTVYVALFQFFESLP). Residues 146–175 (WSYYRHFVIEERYGFNKQTIGFFIKDRLKS) lie on the Cytoplasmic side of the membrane. Residues 176–196 (LAVGLVIGLPIISMLVWIIKA) traverse the membrane as a helical segment. The Lumenal segment spans residues 197–207 (GGHYFYIYAYG). A helical membrane pass occupies residues 208-228 (FTFVVSFIIMFIYPEFIAPIF). Over 229–340 (DRYEHFPDCE…LGHWKLKHMT (112 aa)) the chain is Cytoplasmic. Histidine 329 provides a ligand contact to Zn(2+). Glutamate 330 is an active-site residue. Histidine 333 provides a ligand contact to Zn(2+). Residues 341–361 (FNLIIAQINIFFMFFAFGQLI) form a helical membrane-spanning segment. Residues 362–382 (NVDQLFVDFGFPPSTAPILIR) lie on the Lumenal side of the membrane. Residues 383–403 (LIVVFQFIFMPYSSVLEFLMT) traverse the membrane as a helical segment. Over 404–472 (MLSRKFEFQA…AIDAKMGKEK (69 aa)) the chain is Cytoplasmic. Residue glutamate 410 participates in Zn(2+) binding. Aspartate 414 acts as the Proton donor in catalysis.

It belongs to the peptidase M48A family. In terms of assembly, homodimer; disulfide-linked. The cofactor is Zn(2+).

It is found in the endoplasmic reticulum membrane. The enzyme catalyses Hydrolyzes the peptide bond -P2-(S-farnesyl or geranylgeranyl)C-P1'-P2'-P3'-COOH where P1' and P2' are amino acids with aliphatic side chains and P3' is any C-terminal residue.. Its activity is regulated as follows. Inhibited by ethylenediaminetetraacetic acid (EDTA) but not by serine, aspartic or cysteine protease inhibitors. Inhibited by high concentration of Zn(2+) (&gt; 0.1 mM). Functionally, zinc-dependent metalloproteinase. Proteolytically removes the C-terminal three residues of farnesylated proteins. This chain is CAAX prenyl protease 1 homolog, found in Taenia solium (Pork tapeworm).